The primary structure comprises 95 residues: Small ribosomal subunit protein uS17 (95 aa).

This sequence belongs to the universal ribosomal protein uS17 family. As to quaternary structure, part of the 30S ribosomal subunit.

Functionally, one of the primary rRNA binding proteins, it binds specifically to the 5'-end of 16S ribosomal RNA. This is Small ribosomal subunit protein uS17 from Mycoplasmopsis synoviae (strain 53) (Mycoplasma synoviae).